A 75-amino-acid polypeptide reads, in one-letter code: UPF0270 protein PSPPH_1506 (75 aa).

This sequence belongs to the UPF0270 family.

The protein is UPF0270 protein PSPPH_1506 of Pseudomonas savastanoi pv. phaseolicola (strain 1448A / Race 6) (Pseudomonas syringae pv. phaseolicola (strain 1448A / Race 6)).